A 238-amino-acid chain; its full sequence is Thymidine kinase, cytosolic (238 aa).

Ser2 carries the N-acetylserine modification. Residues Ser2 and Ser13 each carry the phosphoserine modification. ATP-binding positions include 26-33 (GPMFSGKS), 58-60 (DTR), and 97-100 (DEGQ). The active-site Proton acceptor is Glu98. Phe128 provides a ligand contact to substrate. 2 residues coordinate Zn(2+): Cys153 and Cys156. Residues 172–176 (VEVIG) and Tyr181 contribute to the substrate site. Zn(2+) is bound by residues Cys185 and Cys188. A KEN box motif is present at residues 206 to 208 (KEN). A Phosphoserine modification is found at Ser235.

It belongs to the thymidine kinase family. Homotetramer. Tetramerization from dimerization is induced by ATP and increases catalytic efficiency due to a high affinity for thymidine. Tetramerization is inhibited by phosphorylation at Ser-13. Interacts (via the KEN box) with FZR1. Phosphorylated on Ser-13 in mitosis. Phosphorylation of Ser-13 by CDK1 during mitosis reduces homotetramerization and catalytic efficiency when DNA replication is complete and intracellular TK1 is still present at a high level. In terms of processing, polyubiquitinated. Postmitosis, ubiquitination leads to proteasomal degradation. The KEN box sequence located at the C-terminal region targets for degradation by the anaphase promoting complex (APC/C) activated and rate-limited by FZR1.

Its subcellular location is the cytoplasm. The enzyme catalyses thymidine + ATP = dTMP + ADP + H(+). Cell-cycle-regulated enzyme of importance in nucleotide metabolism. Catalyzes the first enzymatic step in the salvage pathway converting thymidine into thymidine monophosphate. Transcriptional regulation limits expression to the S phase of the cell cycle and transient expression coincides with the oscillation in the intracellular dTTP concentration. This is Thymidine kinase, cytosolic (TK1) from Bos taurus (Bovine).